Consider the following 339-residue polypeptide: Methionine synthase (339 aa).

Histidine 212, cysteine 214, and cysteine 295 together coordinate Zn(2+).

This sequence belongs to the archaeal MetE family. Zn(2+) serves as cofactor.

The protein operates within amino-acid biosynthesis; L-methionine biosynthesis via de novo pathway. Its function is as follows. Catalyzes the transfer of a methyl group to L-homocysteine resulting in methionine formation. The physiological methyl donor is unknown. In Sulfolobus acidocaldarius (strain ATCC 33909 / DSM 639 / JCM 8929 / NBRC 15157 / NCIMB 11770), this protein is Methionine synthase.